Here is a 216-residue protein sequence, read N- to C-terminus: Ras-related protein RABA1a (216 aa).

20–27 (GDSGVGKS) serves as a coordination point for GTP. The Effector region signature appears at 42 to 50 (SKSTIGVEF). Residues 68 to 72 (DTAGQ), 126 to 129 (NKCD), and 156 to 157 (SA) each bind GTP. 2 S-geranylgeranyl cysteine lipidation sites follow: C213 and C214.

The protein belongs to the small GTPase superfamily. Rab family.

The protein localises to the cell membrane. Functionally, involved in auxin-mediated response. May be involved in vesicle trafficking of components involved in polar auxin transport. Binds GTP and GDP and possesses intrinsic GTPase activity. This Arabidopsis thaliana (Mouse-ear cress) protein is Ras-related protein RABA1a (RABA1A).